The chain runs to 573 residues: ESX-1 secretion system protein EccA1 (573 aa).

An ATP-binding site is contributed by 334–341 (GPPGTGKT).

The protein belongs to the CbxX/CfxQ family. As to quaternary structure, part of the ESX-1 / type VII secretion system (T7SS), which is composed of cytosolic and membrane components.

The protein resides in the cytoplasm. In terms of biological role, part of the ESX-1 / type VII specialized secretion system (T7SS), which exports several proteins including EsxA and EsxB. EccA1 exhibits ATPase activity and may provide energy for the export of ESX-1 substrates. This Mycobacterium leprae (strain TN) protein is ESX-1 secretion system protein EccA1.